Consider the following 217-residue polypeptide: Frataxin, mitochondrial (217 aa).

The N-terminal 42 residues, 1 to 42 (MWTLGRRSVASFLPRSALPGFAPTRAGAPRPAKDLSLSGLPG), are a transit peptide targeting the mitochondrion.

It belongs to the frataxin family. As to quaternary structure, component of the mitochondrial core iron-sulfur cluster (ISC) complex composed of NFS1, LYRM4, NDUFAB1, ISCU, FXN, and FDX2; this complex is a heterohexamer containing two copies of each monomer. Homodimer. Monomer (probable predominant form). Oligomer. Monomers and polymeric aggregates of &gt;1 MDa have been isolated from mitochondria. A small fraction of heterologous overexpressed recombinant frataxin forms high-molecular weight aggregates that incorporate iron. Interacts with LYRM4. Interacts (via ferrous form) with ISCU; the interaction is possible when both are bound to the dimeric form of the cysteine desulfurase complex (NFS1:LYRM4) and the interaction enhances FXN interaction to the dimeric form of the cysteine desulfurase complex (NFS1:LYRM4). Interacts with FECH; one iron-bound FXN monomer seems to interact with a FECH homodimer. Interacts with SDHA and SDHB. Interacts with ACO2; the interaction is dependent on citrate. Interacts with HSPA9. Interacts with ACO1. Interacts with ISCU (cytoplasmic form). Processed in two steps by mitochondrial processing peptidase (MPP). MPP first cleaves the precursor to intermediate form and subsequently converts the intermediate to yield frataxin mature form (frataxin(81-210)) which is the predominant form. The additional forms, frataxin(56-210) and frataxin(78-210), seem to be produced when the normal maturation process is impaired; their physiological relevance is unsure.

Its subcellular location is the mitochondrion. It localises to the cytoplasm. It is found in the cytosol. The catalysed reaction is 4 Fe(2+) + O2 + 4 H(+) = 4 Fe(3+) + 2 H2O. Its function is as follows. Functions as an activator of persulfide transfer to the scaffoding protein ISCU as component of the core iron-sulfur cluster (ISC) assembly complex and participates to the [2Fe-2S] cluster assembly. Accelerates sulfur transfer from NFS1 persulfide intermediate to ISCU and to small thiols such as L-cysteine and glutathione leading to persulfuration of these thiols and ultimately sulfide release. Binds ferrous ion and is released from FXN upon the addition of both L-cysteine and reduced FDX2 during [2Fe-2S] cluster assembly. The core iron-sulfur cluster (ISC) assembly complex is involved in the de novo synthesis of a [2Fe-2S] cluster, the first step of the mitochondrial iron-sulfur protein biogenesis. This process is initiated by the cysteine desulfurase complex (NFS1:LYRM4:NDUFAB1) that produces persulfide which is delivered on the scaffold protein ISCU in a FXN-dependent manner. Then this complex is stabilized by FDX2 which provides reducing equivalents to accomplish the [2Fe-2S] cluster assembly. Finally, the [2Fe-2S] cluster is transferred from ISCU to chaperone proteins, including HSCB, HSPA9 and GLRX5. May play a role in the protection against iron-catalyzed oxidative stress through its ability to catalyze the oxidation of Fe(2+) to Fe(3+); the oligomeric form but not the monomeric form has in vitro ferroxidase activity. May be able to store large amounts of iron in the form of a ferrihydrite mineral by oligomerization; however, the physiological relevance is unsure as reports are conflicting and the function has only been shown using heterologous overexpression systems. May function as an iron chaperone protein that protects the aconitase [4Fe-4S]2+ cluster from disassembly and promotes enzyme reactivation. May play a role as a high affinity iron binding partner for FECH that is capable of both delivering iron to ferrochelatase and mediating the terminal step in mitochondrial heme biosynthesis. Modulates the RNA-binding activity of ACO1. May be involved in the cytoplasmic iron-sulfur protein biogenesis. May contribute to oxidative stress resistance and overall cell survival. This Bos taurus (Bovine) protein is Frataxin, mitochondrial.